A 604-amino-acid polypeptide reads, in one-letter code: Serine/threonine-protein kinase A-Raf (604 aa).

The 73-residue stretch at 19–91 (GTVKVYLPNK…DGEELIVEVL (73 aa)) folds into the RBD domain. The Phorbol-ester/DAG-type zinc finger occupies 98-144 (MHNFVRKTFFSLAFCDFCLKFLFHGFRCQTCGYKFHQHCSSKVPTVC). Residues H99, C112, C115, C125, C128, H133, C136, and C144 each coordinate Zn(2+). Phosphoserine occurs at positions 157 and 162. Disordered stretches follow at residues 177–222 (NELL…HMVS) and 241–288 (TDAA…EKKK). T181 is modified (phosphothreonine). S186 is subject to Phosphoserine. Positions 210–222 (IRSTSTPNVHMVS) are enriched in polar residues. Low complexity predominate over residues 252-265 (PRGSPSPASVSSGR). Residues S255 and S267 each carry the phosphoserine modification. Over residues 272 to 287 (LPSEQRERKSLADEKK) the composition is skewed to basic and acidic residues. Positions 308-568 (VQLLKRIGTG…PQILATIELL (261 aa)) constitute a Protein kinase domain. Residues 314 to 322 (IGTGSFGTV) and K334 each bind ATP. T316 is subject to Phosphothreonine. D427 serves as the catalytic Proton acceptor.

Belongs to the protein kinase superfamily. TKL Ser/Thr protein kinase family. RAF subfamily. Interacts with TH1L/NELFD. The cofactor is Zn(2+). In terms of processing, dephosphorylation by the SHOC2-MRAS-PP1c (SMP) complex consisting of SHOC2, GTP-bound M-Ras/MRAS and the catalytic subunit of protein phosphatase 1 (PPP1CA, PPP1CB or PPP1CC); this relieves inactivation and stimulates kinase activity.

The enzyme catalyses L-seryl-[protein] + ATP = O-phospho-L-seryl-[protein] + ADP + H(+). It catalyses the reaction L-threonyl-[protein] + ATP = O-phospho-L-threonyl-[protein] + ADP + H(+). Involved in the transduction of mitogenic signals from the cell membrane to the nucleus. May also regulate the TOR signaling cascade. Phosphorylates PFKFB2. This Mus musculus (Mouse) protein is Serine/threonine-protein kinase A-Raf (Araf).